Consider the following 520-residue polypeptide: MIDFRENWRIILLVIVVIVSLFALVSPTLASGPDSNSAVVQQSSQTNLQYGLELAGGTRVRAPLVGVTAEEVEFEPANAREVEQRIATAIDGAGPADVIARPVTETTGTVEVTVEGVSTTELQSILESTGYTASTVRTGVTETTRQEVVRILENKINEAGLSGGTVQEVTTAGGGHFILIEVPNEDAASVRSLVSERGTVVVQAHYPQDDIYTQQTVLQQDNFQSIGSAQEGQSGGAYVPVTVRESAANEFQQATVDTTLARPGGTRCTYSRDQNSTEPCLLLVVNGEVTNSFGMAPRLADSLRGGSWAQDPVFQLQTANVSEAQEVAINLRAGALPAKLDLTGDDGGTTSFISPSQGENFRTDSLLAGLVAVFAVSGVVFLRYRDARVALPMIVTALSEVLILLGFAAGIGYPLDLSVIAGFITVIGTGVDDLVIIADEVLAEGGVSSRRVFQSRFRRAFWVIGAAAATTIIAMSPLAILSLGDLQGFAIFTILGVLVGVLITRPAYGDILRALTTGNL.

6 consecutive transmembrane segments (helical) span residues 10–30 (IILL…PTLA), 364–384 (DSLL…FLRY), 391–411 (LPMI…AAGI), 417–437 (LSVI…LVII), 461–481 (FWVI…LAIL), and 483–503 (LGDL…GVLI).

Belongs to the SecD/SecF family. SecD subfamily. In terms of assembly, part of the protein translocation apparatus. Forms a complex with SecF.

The protein localises to the cell membrane. Involved in protein export. The polypeptide is Protein-export membrane protein SecD (Haloquadratum walsbyi (strain DSM 16790 / HBSQ001)).